The following is a 316-amino-acid chain: Ribosomal RNA large subunit methyltransferase F (316 aa).

The protein belongs to the methyltransferase superfamily. METTL16/RlmF family.

It localises to the cytoplasm. The catalysed reaction is adenosine(1618) in 23S rRNA + S-adenosyl-L-methionine = N(6)-methyladenosine(1618) in 23S rRNA + S-adenosyl-L-homocysteine + H(+). In terms of biological role, specifically methylates the adenine in position 1618 of 23S rRNA. This Pseudomonas putida (strain GB-1) protein is Ribosomal RNA large subunit methyltransferase F.